A 309-amino-acid polypeptide reads, in one-letter code: Ribosomal RNA small subunit methyltransferase H (309 aa).

Residues 36–38 (GGH), aspartate 56, phenylalanine 82, aspartate 103, and glutamine 110 each bind S-adenosyl-L-methionine.

It belongs to the methyltransferase superfamily. RsmH family.

It is found in the cytoplasm. The catalysed reaction is cytidine(1402) in 16S rRNA + S-adenosyl-L-methionine = N(4)-methylcytidine(1402) in 16S rRNA + S-adenosyl-L-homocysteine + H(+). Specifically methylates the N4 position of cytidine in position 1402 (C1402) of 16S rRNA. In Hahella chejuensis (strain KCTC 2396), this protein is Ribosomal RNA small subunit methyltransferase H.